Here is a 478-residue protein sequence, read N- to C-terminus: Spindle defective protein 3 (478 aa).

Over 1–24 (MDQMTVEEKILEHQELEDGSSSFR) the chain is Cytoplasmic. The chain crosses the membrane as a helical span at residues 25-45 (WLVSSTVIAIGGATVALYISG). Topologically, residues 46–52 (KIDWKIP) are extracellular. Residues 53–73 (AIEAGLALTAGGTITCGYLWF) traverse the membrane as a helical segment. Over 74–478 (KKRVKTVRKL…LRRVDDDIIE (405 aa)) the chain is Cytoplasmic.

The protein localises to the mitochondrion. It is found in the mitochondrion outer membrane. Its function is as follows. In the first mitotic division in embryos, required for mitotic spindle alignment and asymmetric cell division. Required for motor-driven chromosome movement and homolog searching within the nucleus, and subsequently ensures homologous chromosome pairing during the prophase stage of meiosis. The protein is Spindle defective protein 3 of Caenorhabditis elegans.